The chain runs to 120 residues: Fumarate reductase subunit D (120 aa).

The next 3 helical transmembrane spans lie at 25–45, 55–75, and 100–120; these read FAML…LGVI, VAGF…ISMP, and IACY…IFMI.

Belongs to the FrdD family. Part of an enzyme complex containing four subunits: a flavoprotein (FrdA), an iron-sulfur protein (FrdB), and two hydrophobic anchor proteins (FrdC and FrdD).

Its subcellular location is the cell inner membrane. Anchors the catalytic components of the fumarate reductase complex to the cell membrane, binds quinones. The chain is Fumarate reductase subunit D from Aliivibrio salmonicida (strain LFI1238) (Vibrio salmonicida (strain LFI1238)).